The sequence spans 652 residues: Sciellin (652 aa).

A compositionally biased stretch (basic residues) spans 1 to 10; it reads MSNFSSRKKS. 2 disordered regions span residues 1-29 and 43-180; these read MSNF…QQGF and SWIK…KPLG. Residues 66-95 show a composition bias toward basic and acidic residues; sequence NSHDALDRKLIERDEPKATISRYRSEDMLD. Lys82 carries the post-translational modification N6-acetyllysine. Over residues 97 to 110 the composition is skewed to polar residues; the sequence is TLSSFRTPQSTKTP. Residues 111–130 are compositionally biased toward low complexity; sequence AVSSFNANTTATASTPATTP. Residues 161 to 170 are compositionally biased toward pro residues; it reads LHPPLPPKPC. 15 tandem repeats follow at residues 207 to 226, 227 to 241, 242 to 261, 262 to 281, 282 to 301, 302 to 320, 321 to 340, 341 to 360, 361 to 380, 381 to 398, 399 to 418, 419 to 438, 439 to 458, 459 to 477, and 478 to 496. Positions 207–496 are 15 X approximate tandem repeats; the sequence is TEDLDDIIRV…VNSHVAEKNG (290 aa). At Ser264 the chain carries Phosphoserine. At Ser343 the chain carries Phosphoserine. Positions 353–385 are disordered; sequence EVNRSNKGGPSLDNFTKGVPARSRANQRDQDLD. Positions 436-455 are disordered; the sequence is NQRNHDVDSTIRGNPTGTRC. The segment covering 446-455 has biased composition (polar residues); sequence IRGNPTGTRC. The region spanning 583-649 is the LIM zinc-binding domain; sequence DMCTYCRKPL…EPCYSKVMAK (67 aa).

In terms of tissue distribution, expressed in the upper layers of stratified epithelia, including, ependyma and choroid plexus of the brain ventricles.

It is found in the cytoplasm. It localises to the membrane. Functionally, may function in the assembly or regulation of proteins in the cornified envelope. The LIM domain may be involved in homotypic or heterotypic associations and may function to localize sciellin to the cornified envelope. This is Sciellin (Scel) from Mus musculus (Mouse).